We begin with the raw amino-acid sequence, 491 residues long: Glutamyl-tRNA(Gln) amidotransferase subunit A (491 aa).

Active-site charge relay system residues include Lys79 and Ser154. The Acyl-ester intermediate role is filled by Ser178.

This sequence belongs to the amidase family. GatA subfamily. Heterotrimer of A, B and C subunits.

It catalyses the reaction L-glutamyl-tRNA(Gln) + L-glutamine + ATP + H2O = L-glutaminyl-tRNA(Gln) + L-glutamate + ADP + phosphate + H(+). Functionally, allows the formation of correctly charged Gln-tRNA(Gln) through the transamidation of misacylated Glu-tRNA(Gln) in organisms which lack glutaminyl-tRNA synthetase. The reaction takes place in the presence of glutamine and ATP through an activated gamma-phospho-Glu-tRNA(Gln). In Synechococcus sp. (strain CC9902), this protein is Glutamyl-tRNA(Gln) amidotransferase subunit A.